The following is a 678-amino-acid chain: Methionine--tRNA ligase (678 aa).

A 'HIGH' region motif is present at residues 14-24 (PYANGSIHLGH). Zn(2+) is bound by residues cysteine 145, cysteine 148, cysteine 158, and cysteine 161. The 'KMSKS' region motif lies at 331–335 (KMSKS). Residue lysine 334 coordinates ATP. The tRNA-binding domain occupies 576–678 (AFAAVDLRIA…SGAKPGQRVK (103 aa)).

Belongs to the class-I aminoacyl-tRNA synthetase family. MetG type 1 subfamily. Homodimer. Zn(2+) is required as a cofactor.

The protein resides in the cytoplasm. It carries out the reaction tRNA(Met) + L-methionine + ATP = L-methionyl-tRNA(Met) + AMP + diphosphate. Functionally, is required not only for elongation of protein synthesis but also for the initiation of all mRNA translation through initiator tRNA(fMet) aminoacylation. The chain is Methionine--tRNA ligase from Pseudomonas aeruginosa (strain UCBPP-PA14).